The primary structure comprises 281 residues: Imidazole glycerol phosphate synthase subunit HisF (281 aa).

Active-site residues include Asp-12 and Asp-131. A disordered region spans residues 256 to 281 (VRQAEPLPQPAREGLGDSARRAMSSG).

It belongs to the HisA/HisF family. In terms of assembly, heterodimer of HisH and HisF.

Its subcellular location is the cytoplasm. The catalysed reaction is 5-[(5-phospho-1-deoxy-D-ribulos-1-ylimino)methylamino]-1-(5-phospho-beta-D-ribosyl)imidazole-4-carboxamide + L-glutamine = D-erythro-1-(imidazol-4-yl)glycerol 3-phosphate + 5-amino-1-(5-phospho-beta-D-ribosyl)imidazole-4-carboxamide + L-glutamate + H(+). It participates in amino-acid biosynthesis; L-histidine biosynthesis; L-histidine from 5-phospho-alpha-D-ribose 1-diphosphate: step 5/9. In terms of biological role, IGPS catalyzes the conversion of PRFAR and glutamine to IGP, AICAR and glutamate. The HisF subunit catalyzes the cyclization activity that produces IGP and AICAR from PRFAR using the ammonia provided by the HisH subunit. The polypeptide is Imidazole glycerol phosphate synthase subunit HisF (Thermosynechococcus vestitus (strain NIES-2133 / IAM M-273 / BP-1)).